The primary structure comprises 150 residues: Macrodomain Ter protein (150 aa).

Belongs to the MatP family. In terms of assembly, homodimer.

Its subcellular location is the cytoplasm. Required for spatial organization of the terminus region of the chromosome (Ter macrodomain) during the cell cycle. Prevents early segregation of duplicated Ter macrodomains during cell division. Binds specifically to matS, which is a 13 bp signature motif repeated within the Ter macrodomain. In Salmonella arizonae (strain ATCC BAA-731 / CDC346-86 / RSK2980), this protein is Macrodomain Ter protein.